A 669-amino-acid polypeptide reads, in one-letter code: CoB--CoM heterodisulfide reductase iron-sulfur subunit A 1 (669 aa).

Residue 153–176 (GGGIAGIQAALDLADQGFKVYLVE) coordinates FAD. Sec-200 is a non-standard amino acid (selenocysteine). 4Fe-4S ferredoxin-type domains follow at residues 239–270 (KKPR…FDLG), 287–318 (LVYT…FDQE), 584–613 (ITAT…MVEK), and 617–646 (RVAE…LRYY). Residues Cys-249, Cys-252, Cys-255, Cys-259, Cys-296, Cys-299, Cys-302, Cys-306, Cys-593, Cys-596, Cys-599, Cys-603, Cys-626, Cys-629, Cys-632, and Cys-636 each contribute to the [4Fe-4S] cluster site.

Belongs to the HdrA family. As to quaternary structure, the ferredoxin:CoB-CoM heterodisulfide reductase is composed of three subunits; HdrA, HdrB and HdrC. It depends on [4Fe-4S] cluster as a cofactor. FAD serves as cofactor.

It participates in cofactor metabolism; coenzyme M-coenzyme B heterodisulfide reduction; coenzyme B and coenzyme M from coenzyme M-coenzyme B heterodisulfide: step 1/1. In terms of biological role, part of a complex that catalyzes the reversible reduction of CoM-S-S-CoB to the thiol-coenzymes H-S-CoM (coenzyme M) and H-S-CoB (coenzyme B). This Methanopyrus kandleri (strain AV19 / DSM 6324 / JCM 9639 / NBRC 100938) protein is CoB--CoM heterodisulfide reductase iron-sulfur subunit A 1 (hdrA1).